The chain runs to 527 residues: Pentatricopeptide repeat-containing protein At4g25270, chloroplastic (527 aa).

A chloroplast-targeting transit peptide spans 1–47; it reads MVSIVVHKPSFSYPSVSSSSMKKKPRHHQQLKQHRQNQYNNNGFTSL. The tract at residues 12–44 is disordered; the sequence is SYPSVSSSSMKKKPRHHQQLKQHRQNQYNNNGF. A compositionally biased stretch (basic residues) spans 21 to 35; sequence MKKKPRHHQQLKQHR. 10 PPR repeats span residues 126-156, 159-193, 194-228, 229-259, 260-294, 295-326, 327-361, 367-389, 390-425, and 426-457; these read NLGI…MSKR, SPFA…GVKP, DRFT…GFGY, DVYV…IPHK, DYVS…GIEP, DKVA…GMEW, ELSV…DTVS, SAHS…NAKP, DGIT…GIDP, and KMEH…MGLE. Residues 462 to 527 are type E motif; degenerate; sequence VWGALLYACY…QMMVDRGLET (66 aa).

This sequence belongs to the PPR family. PCMP-E subfamily.

It localises to the plastid. The protein localises to the chloroplast. This Arabidopsis thaliana (Mouse-ear cress) protein is Pentatricopeptide repeat-containing protein At4g25270, chloroplastic (PCMP-E53).